The chain runs to 493 residues: CBL-interacting protein kinase 26 (493 aa).

Positions 12–266 constitute a Protein kinase domain; sequence YEIGRQLGQG…IPKIKRSAWY (255 aa). ATP contacts are provided by residues 18–26 and K41; that span reads LGQGNFAKV. D134 functions as the Proton acceptor in the catalytic mechanism. Positions 152-181 are activation loop; it reads DFGLSALSESKRHDGLLHTTCGTPAYVAPE. Positions 311-332 are disordered; sequence KVYTNGEATTSDSPECSNSDGK. The span at 316-332 shows a compositional bias: polar residues; sequence GEATTSDSPECSNSDGK. The NAF domain maps to 320-360; that stretch reads TSDSPECSNSDGKQASLSLPNLNAFDIISLSTGFDLSNLFE. Residues 365–394 are PPI; it reads RREERFTTRQPAAAIFAKLNELARRFKLKI. Residues 465–493 form a disordered region; sequence GQHQQPEQSMQGMQGEQQPSRLPSQQPQG.

The protein belongs to the protein kinase superfamily. CAMK Ser/Thr protein kinase family. SNF1 subfamily. Requires Mn(2+) as cofactor.

The catalysed reaction is L-seryl-[protein] + ATP = O-phospho-L-seryl-[protein] + ADP + H(+). It catalyses the reaction L-threonyl-[protein] + ATP = O-phospho-L-threonyl-[protein] + ADP + H(+). Functionally, CIPK serine-threonine protein kinases interact with CBL proteins. Binding of a CBL protein to the regulatory NAF domain of CIPK protein lead to the activation of the kinase in a calcium-dependent manner. This Oryza sativa subsp. japonica (Rice) protein is CBL-interacting protein kinase 26 (CIPK26).